A 151-amino-acid polypeptide reads, in one-letter code: MAKINFYAEGVSLPRIRRRIVGKWIAEVCSRYGKAVGEISYLFCDDEYILKANQEFLDHDYYTDIITFDSCEADTVNGDLLISLDTVRSNARALDLRYEDELHRVIIHGILHLCGLKDKSKKDEAQMRAAEEEALVMLQETIGSELSLLHT.

Positions 108, 112, and 118 each coordinate Zn(2+).

This sequence belongs to the endoribonuclease YbeY family. It depends on Zn(2+) as a cofactor.

The protein resides in the cytoplasm. In terms of biological role, single strand-specific metallo-endoribonuclease involved in late-stage 70S ribosome quality control and in maturation of the 3' terminus of the 16S rRNA. This chain is Endoribonuclease YbeY, found in Porphyromonas gingivalis (strain ATCC 33277 / DSM 20709 / CIP 103683 / JCM 12257 / NCTC 11834 / 2561).